The sequence spans 134 residues: Profilin-1 (134 aa).

A disulfide bridge links Cys13 with Cys118. The short motif at 84 to 100 (AVIRGKKGSGGITTKKT) is the Involved in PIP2 interaction element. Phosphothreonine is present on Thr114.

This sequence belongs to the profilin family. In terms of assembly, occurs in many kinds of cells as a complex with monomeric actin in a 1:1 ratio. Post-translationally, phosphorylated by MAP kinases.

Its subcellular location is the cytoplasm. The protein resides in the cytoskeleton. Its function is as follows. Binds to actin and affects the structure of the cytoskeleton. At high concentrations, profilin prevents the polymerization of actin, whereas it enhances it at low concentrations. The sequence is that of Profilin-1 from Olea europaea (Common olive).